Consider the following 218-residue polypeptide: Peptide deformylase (218 aa).

Positions 130 and 172 each coordinate Fe cation. The active site involves glutamate 173. A Fe cation-binding site is contributed by histidine 176.

This sequence belongs to the polypeptide deformylase family. The cofactor is Fe(2+).

It catalyses the reaction N-terminal N-formyl-L-methionyl-[peptide] + H2O = N-terminal L-methionyl-[peptide] + formate. Functionally, removes the formyl group from the N-terminal Met of newly synthesized proteins. Requires at least a dipeptide for an efficient rate of reaction. N-terminal L-methionine is a prerequisite for activity but the enzyme has broad specificity at other positions. The chain is Peptide deformylase from Bifidobacterium adolescentis (strain ATCC 15703 / DSM 20083 / NCTC 11814 / E194a).